A 293-amino-acid chain; its full sequence is Mitochondrial inner membrane protease atp23 (293 aa).

The interval 1–51 is disordered; it reads MSPAPTTSAGPASSGIPPSSLPTSTVTEDDTKPSSSSSKANDLLPRYLTND. The segment covering 8–22 has biased composition (low complexity); sequence SAGPASSGIPPSSLP. Histidine 190 provides a ligand contact to a divalent metal cation. The active site involves glutamate 191. Histidine 194 contributes to the a divalent metal cation binding site.

It belongs to the peptidase M76 family.

The protein resides in the mitochondrion inner membrane. Has a dual role in the assembly of mitochondrial ATPase. Acts as a protease that removes N-terminal residues of mitochondrial ATPase CF(0) subunit 6 at the intermembrane space side. Also involved in the correct assembly of the membrane-embedded ATPase CF(0) particle, probably mediating association of subunit 6 with the subunit 9 ring. In Neurospora crassa (strain ATCC 24698 / 74-OR23-1A / CBS 708.71 / DSM 1257 / FGSC 987), this protein is Mitochondrial inner membrane protease atp23 (atp23).